Consider the following 156-residue polypeptide: MPRRRVVAKREALPDPKFGDVTLAKFMNHVMISGKKSVAERIVYGALDVVKTKLNRDPLEVFSEALENIAPLVEVKSRRVGGATYQVPVEVRASRRSALAMRWLVDYSRKRSEKSMPQRLAGELIDASQGKGAAVKKREDVHRMAEANKAFSHFRF.

This sequence belongs to the universal ribosomal protein uS7 family. In terms of assembly, part of the 30S ribosomal subunit. Contacts proteins S9 and S11.

One of the primary rRNA binding proteins, it binds directly to 16S rRNA where it nucleates assembly of the head domain of the 30S subunit. Is located at the subunit interface close to the decoding center, probably blocks exit of the E-site tRNA. The sequence is that of Small ribosomal subunit protein uS7 from Cellvibrio japonicus (strain Ueda107) (Pseudomonas fluorescens subsp. cellulosa).